Consider the following 645-residue polypeptide: UPF0313 protein CLK_3381 (645 aa).

Residues 295–566 (AIKEVKFSIT…RMQRALLQFS (272 aa)) form the Radical SAM core domain. Residues Cys-309, Cys-313, and Cys-316 each contribute to the [4Fe-4S] cluster site. Positions 598–645 (NKPYKKSHKKNNVKNNNNHYNKNNNYNKNKDVSKKNKKNSLSKHKKRK) are disordered. Residues 600–609 (PYKKSHKKNN) show a composition bias toward basic residues. Low complexity predominate over residues 610 to 624 (VKNNNNHYNKNNNYN). Residues 632 to 645 (KNKKNSLSKHKKRK) show a composition bias toward basic residues.

The protein belongs to the UPF0313 family. Requires [4Fe-4S] cluster as cofactor.

The protein is UPF0313 protein CLK_3381 of Clostridium botulinum (strain Loch Maree / Type A3).